Reading from the N-terminus, the 189-residue chain is Protein CURLY FLAG LEAF 1 (189 aa).

Residues 50–55 carry the EAR motif; that stretch reads TLELNS. The 35-residue stretch at 57–91 folds into the WW domain; the sequence is LSLPCHWEQCLDLKTGEIYYINWKNGMRVKEDPRK. The disordered stretch occupies residues 90 to 148; the sequence is RKVMNADPDSGDSYGTVCSEEDSSYYDSEESSSESSPSSRENHKEEEEEEEEEEEEEED. 2 stretches are compositionally biased toward acidic residues: residues 108–121 and 135–148; these read SEEDSSYYDSEESS and EEEEEEEEEEEEED.

In terms of assembly, interacts with BHLH122/CFLAP1 and BHLH80/CFLAP2. Binds to HDG1. Mostly observed in roots, flowers and siliques. Expressed in cells differentiated from epidermal cells such as trichomes, stigmatic papillar cells and guard cells, as well as in tissues undergoing abscission and dehiscence.

Functionally, negatively regulates the cuticle development by interacting with the HD-ZIP IV transcription factor HDG1. This is Protein CURLY FLAG LEAF 1 from Arabidopsis thaliana (Mouse-ear cress).